The primary structure comprises 468 residues: Tumor necrosis factor receptor superfamily member 10A (468 aa).

The first 23 residues, 1–23 (MAPPPARVHLGAFLAVTPNPGSA), serve as a signal peptide directing secretion. Positions 17 to 82 (TPNPGSAASG…APGPRPAREA (66 aa)) are disordered. A compositionally biased stretch (low complexity) spans 20-34 (PGSAASGTEAAAATP). Topologically, residues 24–239 (ASGTEAAAAT…VHKESGNGHN (216 aa)) are extracellular. At Arg-52 the chain carries Omega-N-methylarginine. Low complexity predominate over residues 63–74 (GPSARARAGRAP). 3 TNFR-Cys repeats span residues 107–145 (SAAT…PGAC), 147–188 (RCTE…NTAC), and 189–229 (QCKP…DIEC). Intrachain disulfides connect Cys-132/Cys-145, Cys-148/Cys-164, Cys-167/Cys-180, Cys-170/Cys-188, Cys-190/Cys-204, Cys-207/Cys-221, and Cys-211/Cys-229. An N-linked (GlcNAc...) asparagine glycan is attached at Asn-156. The helical transmembrane segment at 240–262 (IWVILVVTLVVPLLLVAVLIVCC) threads the bilayer. Residues 263–468 (CIGSGCGGDP…DGTGSAVSLE (206 aa)) lie on the Cytoplasmic side of the membrane. A Death domain is found at 365–448 (MLFFDKFANI…HAREKIQDLL (84 aa)). Phosphoserine occurs at positions 424, 463, and 466.

Monomer. Homooligomers and heterooligomers with TNFRSF10B. Three TNFRSF10A molecules interact with the TNFSF10 homotrimer. Can interact with TRADD and RIPK1. Interacts with ARAP1. In the absence of stimulation, interacts with BIRC2, DDX3X and GSK3B. The interaction with BIRC2 and DDX3X is further enhanced upon receptor stimulation and accompanied by DDX3X and BIRC2 cleavage. Interacts with ZDHHC3. Interacts with PTPN6; this interaction enables the inhibition of T-cell receptor signaling via LCK. As to quaternary structure, (Microbial infection) Interacts with HCMV protein UL141; this interaction prevents TNFRSF10A cell surface expression. Palmitoylated. Palmitoylation of TNFRSF10A is required for its association with lipid rafts, oligomerization and function in TRAIL-induced cell death. Palmitoylated by ZDHHC3. As to expression, widely expressed. High levels are found in spleen, peripheral blood leukocytes, small intestine and thymus, but also in K-562 erythroleukemia cells, MCF-7 breast carcinoma cells and activated T-cells.

The protein localises to the cell membrane. It is found in the membrane raft. Its subcellular location is the cytoplasm. It localises to the cytosol. Its function is as follows. Receptor for the cytotoxic ligand TNFSF10/TRAIL. The adapter molecule FADD recruits caspase-8 to the activated receptor. The resulting death-inducing signaling complex (DISC) performs caspase-8 proteolytic activation which initiates the subsequent cascade of caspases (aspartate-specific cysteine proteases) mediating apoptosis. Promotes the activation of NF-kappa-B. The protein is Tumor necrosis factor receptor superfamily member 10A (TNFRSF10A) of Homo sapiens (Human).